The primary structure comprises 205 residues: Small ribosomal subunit protein uS4 (205 aa).

Positions Pro-26–Asp-47 are disordered. Residues Arg-94 to Leu-154 form the S4 RNA-binding domain.

It belongs to the universal ribosomal protein uS4 family. In terms of assembly, part of the 30S ribosomal subunit. Contacts protein S5. The interaction surface between S4 and S5 is involved in control of translational fidelity.

One of the primary rRNA binding proteins, it binds directly to 16S rRNA where it nucleates assembly of the body of the 30S subunit. In terms of biological role, with S5 and S12 plays an important role in translational accuracy. The protein is Small ribosomal subunit protein uS4 of Gluconacetobacter diazotrophicus (strain ATCC 49037 / DSM 5601 / CCUG 37298 / CIP 103539 / LMG 7603 / PAl5).